Here is a 528-residue protein sequence, read N- to C-terminus: Membrane protein insertase YidC (528 aa).

Helical transmembrane passes span 5-25 (VVIA…IFPP), 346-366 (YGIA…PLTH), 416-436 (LPMI…MFSI), and 486-506 (MLAL…GLVL).

It belongs to the OXA1/ALB3/YidC family. Type 1 subfamily. As to quaternary structure, interacts with the Sec translocase complex via SecD. Specifically interacts with transmembrane segments of nascent integral membrane proteins during membrane integration.

Its subcellular location is the cell inner membrane. Its function is as follows. Required for the insertion and/or proper folding and/or complex formation of integral membrane proteins into the membrane. Involved in integration of membrane proteins that insert both dependently and independently of the Sec translocase complex, as well as at least some lipoproteins. Aids folding of multispanning membrane proteins. This Geotalea uraniireducens (strain Rf4) (Geobacter uraniireducens) protein is Membrane protein insertase YidC.